We begin with the raw amino-acid sequence, 599 residues long: Protein linkin (599 aa).

A signal peptide spans 1–19; it reads MKKILPIIWLINLVSGSLS. At 20–553 the chain is on the extracellular side; it reads LEKKAPDLLG…SRLYVTPSAL (534 aa). N-linked (GlcNAc...) asparagine glycans are attached at residues Asn50, Asn117, Asn163, Asn361, and Asn378. The chain crosses the membrane as a helical span at residues 554-574; the sequence is IVQSLAVIALVCCMLLMVVVF. Over 575 to 599 the chain is Cytoplasmic; it reads LHYREKKEDRYERQQQSHRFHFDAM.

The protein belongs to the TIP family. In terms of tissue distribution, expressed in all somatic gonadal cells including distal tip cells, anchor cell, uterine precursor cells and spermatheca precursor cells of the hermaphrodite. Also expressed in the pharynx, pharyngeal-intestinal valve, intestine, excretory cell and canal, seam cells, a subset of hypodermal cells, vulval precursor cells of the hermaphrodite and hook precursor cells in the male.

It is found in the apical cell membrane. The protein localises to the lateral cell membrane. Its function is as follows. Probable cell adhesion protein involved in gonadal cell migration. The sequence is that of Protein linkin from Caenorhabditis elegans.